Reading from the N-terminus, the 540-residue chain is Chaperonin GroEL 1 (540 aa).

Residues 30–33, lysine 51, 87–91, glycine 415, 480–482, and aspartate 496 each bind ATP; these read TLGP, DGTTT, and NAA.

The protein belongs to the chaperonin (HSP60) family. In terms of assembly, forms a cylinder of 14 subunits composed of two heptameric rings stacked back-to-back. Interacts with the co-chaperonin GroES.

The protein localises to the cytoplasm. The catalysed reaction is ATP + H2O + a folded polypeptide = ADP + phosphate + an unfolded polypeptide.. Together with its co-chaperonin GroES, plays an essential role in assisting protein folding. The GroEL-GroES system forms a nano-cage that allows encapsulation of the non-native substrate proteins and provides a physical environment optimized to promote and accelerate protein folding. The chain is Chaperonin GroEL 1 from Bradyrhizobium diazoefficiens (strain JCM 10833 / BCRC 13528 / IAM 13628 / NBRC 14792 / USDA 110).